A 256-amino-acid polypeptide reads, in one-letter code: uncharacterized protein (256 aa).

This is an uncharacterized protein from Bacillus subtilis (strain 168).